Consider the following 1036-residue polypeptide: Phytosulfokine receptor 2 (1036 aa).

Residues 1–16 (MVIILLLVFFVGSSVS) form the signal peptide. Residues Asn36 and Asn45 are each glycosylated (N-linked (GlcNAc...) asparagine). 17 LRR repeats span residues 89 to 111 (ELRV…ISKL), 113 to 136 (QLQV…SGLK), 137 to 159 (LIQS…GVFP), 160 to 182 (GLVM…LCSS), 185 to 207 (GIQV…YNCS), 209 to 231 (SIQQ…LYSI), 233 to 256 (ELEQ…SNLS), 257 to 279 (GLKS…FGNL), 281 to 303 (QLEH…LSQC), 305 to 326 (KLRV…NFTG), 329 to 351 (DLCV…LGHC), 353 to 375 (KMKI…FKNL), 377 to 398 (SLLF…MNVL), 403 to 423 (NLST…NNVT), 427 to 450 (NLAI…LNCK), 451 to 473 (KLEV…IGKM), and 475 to 498 (SLFY…TELK). Residues Asn142, Asn165, and Asn205 are each glycosylated (N-linked (GlcNAc...) asparagine). N-linked (GlcNAc...) asparagine glycosylation is found at Asn251, Asn254, and Asn278. N-linked (GlcNAc...) asparagine glycosylation is found at Asn313 and Asn323. Asn385, Asn403, and Asn421 each carry an N-linked (GlcNAc...) asparagine glycan. 5 N-linked (GlcNAc...) asparagine glycosylation sites follow: Asn483, Asn504, Asn523, Asn549, and Asn571. 2 LRR repeats span residues 561–583 (ELHM…ISGL) and 585–606 (NLEV…SFQS). A helical membrane pass occupies residues 680-700 (IVVLTISLAIGITLLLSVILL). Thr751 carries the phosphothreonine modification. Residues 754–1025 (FSQANIIGCG…PLIEEVVTWL (272 aa)) form the Protein kinase domain. Residues 760 to 768 (IGCGGFGLV) and Lys782 contribute to the ATP site. A phosphotyrosine mark is found at Tyr827 and Tyr867. Asp880 serves as the catalytic Proton acceptor. Phosphotyrosine is present on Tyr922. An LRR 20 repeat occupies 995-1020 (RTVLEMLEIACKCIDHEPRRRPLIEE).

Belongs to the protein kinase superfamily. Ser/Thr protein kinase family.

The protein resides in the cell membrane. The catalysed reaction is L-seryl-[protein] + ATP = O-phospho-L-seryl-[protein] + ADP + H(+). The enzyme catalyses L-threonyl-[protein] + ATP = O-phospho-L-threonyl-[protein] + ADP + H(+). Functionally, phytosulfokine receptor with a serine/threonine-protein kinase activity. This Arabidopsis thaliana (Mouse-ear cress) protein is Phytosulfokine receptor 2 (PSKR2).